Here is a 135-residue protein sequence, read N- to C-terminus: ATP synthase epsilon chain (135 aa).

This sequence belongs to the ATPase epsilon chain family. F-type ATPases have 2 components, CF(1) - the catalytic core - and CF(0) - the membrane proton channel. CF(1) has five subunits: alpha(3), beta(3), gamma(1), delta(1), epsilon(1). CF(0) has three main subunits: a, b and c.

The protein localises to the cell inner membrane. Produces ATP from ADP in the presence of a proton gradient across the membrane. The sequence is that of ATP synthase epsilon chain from Rhodopseudomonas palustris (strain HaA2).